We begin with the raw amino-acid sequence, 672 residues long: Leucine-rich repeat receptor-like protein kinase PXC1 (672 aa).

The N-terminal stretch at 1–21 is a signal peptide; that stretch reads MAAKPLLLPLLLLLHLSITLA. Residues 22-269 lie on the Extracellular side of the membrane; sequence QNDTNALTLF…IHSHRGIKPG (248 aa). N-linked (GlcNAc...) asparagine glycosylation is found at Asn23, Asn44, and Asn101. The stretch at 87–110 is one LRR 1 repeat; it reads LDQLRLLDLHDNRLNGTVSPLTNC. A Glycyl lysine isopeptide (Lys-Gly) (interchain with G-Cter in ubiquitin) cross-link involves residue Lys111. LRR repeat units lie at residues 112–134, 135–158, 160–181, and 182–205; these read NLRL…ISFL, KRMI…ILGF, RVLT…FSQM, and KSLL…VVKK. N-linked (GlcNAc...) asparagine glycans are attached at residues Asn188 and Asn197. Polar residues predominate over residues 233-249; sequence ESSNTDQIVPSNPTSIP. The interval 233-254 is disordered; that stretch reads ESSNTDQIVPSNPTSIPHSPVS. A helical transmembrane segment spans residues 270–290; the sequence is IIAAVIGGCVAVIVLVSFGFA. The Cytoplasmic segment spans residues 291-672; sequence FCCGRLDRNG…MSPSLATTDG (382 aa). The tract at residues 300–333 is disordered; sequence GERSKSGSVETGFVGGGEGKRRSSYGEGGESDAT. The region spanning 357-645 is the Protein kinase domain; sequence KASAEMLGKG…AEVVKMVEEI (289 aa). ATP-binding positions include 363–371 and Lys386; that span reads LGKGSLGTV. The segment at 650-672 is disordered; sequence SPVGEDFDESRNSMSPSLATTDG. The segment covering 661 to 672 has biased composition (polar residues); that stretch reads NSMSPSLATTDG.

It belongs to the protein kinase superfamily. Ser/Thr protein kinase family. Expressed in the vascular strands of cotyledons, the shoot apex, hypocotyls, roots, leaves, stems and flowers.

It localises to the cell membrane. Its function is as follows. Leucine-rich repeat receptor-like protein kinase involved in secondary cell wall formation in xylem fibers. May play a role in a regulatory network which also incorporates the TDR/PXY signaling pathway and regulates the maturation of interfascicular fiber cells. May promote the initiation of secondary cell wall deposition during the procedure of cell expansion. The polypeptide is Leucine-rich repeat receptor-like protein kinase PXC1 (Arabidopsis thaliana (Mouse-ear cress)).